A 628-amino-acid chain; its full sequence is Forkhead box protein O (628 aa).

Phosphothreonine; by PKB/AKT1 is present on T50. S81 bears the Phosphoserine mark. The fork-head DNA-binding region spans 101–207 (WGNLSYADLI…ETSRYEKRRG (107 aa)). Disordered stretches follow at residues 188–210 (KSVR…GRAK) and 223–270 (GLND…SSCG). At S196 the chain carries Phosphoserine; by PKB/AKT1. 2 stretches are compositionally biased toward polar residues: residues 227–236 (ATPSPSSSVS) and 261–270 (RASSNASSCG). A Phosphoserine; by PKB/AKT1 modification is found at S264. Residues S267, S268, and S273 each carry the phosphoserine modification. Disordered regions lie at residues 327–373 (SAAS…SLQP) and 398–451 (NSVT…QQQQ). A compositionally biased stretch (pro residues) spans 334–343 (TQPPPPPYPA). Low complexity predominate over residues 344–359 (PQQQQQQQPQQQQAYT). The span at 411–423 (SEPSSDSLNTYSN) shows a compositional bias: polar residues. Over residues 438 to 451 (QQQRQQQQQQQQQQ) the composition is skewed to low complexity.

In terms of assembly, interacts with melt.

It localises to the cytoplasm. The protein resides in the nucleus. Functionally, transcription factor involved in the regulation of the insulin signaling pathway. Consistently activates both the downstream target Thor\d4EBP and the feedback control target InR. Involved in negative regulation of the cell cycle, modulating cell growth and proliferation. In response to cellular stresses, such as nutrient deprivation or increased levels of reactive oxygen species, foxo is activated and inhibits growth through the action of target genes such as Thor. Foxo activated in the adult fat body can regulate lifespan in adults; an insulin peptide itself may function as one secondary messenger of insulin-regulated aging. Also regulates Lip4, homolog of human acid lipases, thereby acting as a key modulator of lipid metabolism by insulin signaling and integrates insulin responses to glucose and lipid homeostasis. This is Forkhead box protein O from Drosophila willistoni (Fruit fly).